The sequence spans 51 residues: Epididymal sperm protein E (51 aa).

A zinc finger lies at 8–39 (CVRCRRKTPSFNSKTVTFRNKRRAIRSHCAYC).

In terms of tissue distribution, sperm.

It is found in the nucleus. The chain is Epididymal sperm protein E from Sepia officinalis (Common cuttlefish).